A 357-amino-acid polypeptide reads, in one-letter code: S-adenosyl-L-methionine:benzoic acid/salicylic acid carboxyl methyltransferase 3 (357 aa).

Residue Y18 coordinates S-adenosyl-L-homocysteine. Residue Q25 coordinates benzoate. Residues C59, N64, D96, L97, S135, and F136 each coordinate S-adenosyl-L-homocysteine. A benzoate-binding site is contributed by W157. Mg(2+)-binding residues include N168, D254, F256, and N257. Q260 contributes to the benzoate binding site.

It belongs to the methyltransferase superfamily. Type-7 methyltransferase family.

The catalysed reaction is benzoate + S-adenosyl-L-methionine = methyl benzoate + S-adenosyl-L-homocysteine. It participates in aromatic compound metabolism. Its function is as follows. Converts benzoic acid into the volatile ester methyl benzoates. This scent, mostly produced in a rhythmical, diurnal manner, attracts the pollinators. This chain is S-adenosyl-L-methionine:benzoic acid/salicylic acid carboxyl methyltransferase 3, found in Petunia hybrida (Petunia).